A 419-amino-acid chain; its full sequence is UDP-N-acetylglucosamine 1-carboxyvinyltransferase (419 aa).

Residue 22 to 23 (KN) participates in phosphoenolpyruvate binding. R92 serves as a coordination point for UDP-N-acetyl-alpha-D-glucosamine. C116 serves as the catalytic Proton donor. C116 is subject to 2-(S-cysteinyl)pyruvic acid O-phosphothioketal. UDP-N-acetyl-alpha-D-glucosamine-binding residues include D306 and I328.

The protein belongs to the EPSP synthase family. MurA subfamily.

Its subcellular location is the cytoplasm. It carries out the reaction phosphoenolpyruvate + UDP-N-acetyl-alpha-D-glucosamine = UDP-N-acetyl-3-O-(1-carboxyvinyl)-alpha-D-glucosamine + phosphate. The protein operates within cell wall biogenesis; peptidoglycan biosynthesis. Cell wall formation. Adds enolpyruvyl to UDP-N-acetylglucosamine. In Psychromonas ingrahamii (strain DSM 17664 / CCUG 51855 / 37), this protein is UDP-N-acetylglucosamine 1-carboxyvinyltransferase.